A 208-amino-acid polypeptide reads, in one-letter code: Adapter protein MecA (208 aa).

Belongs to the MecA family. Homodimer.

In terms of biological role, enables the recognition and targeting of unfolded and aggregated proteins to the ClpC protease or to other proteins involved in proteolysis. This chain is Adapter protein MecA, found in Exiguobacterium sibiricum (strain DSM 17290 / CCUG 55495 / CIP 109462 / JCM 13490 / 255-15).